The primary structure comprises 274 residues: Large ribosomal subunit protein uL2 (274 aa).

Disordered regions lie at residues 28–54 and 221–274; these read KPFAPLLEKNSKTGGRNNNGRITTRHI and RGTA…RSKK. Polar residues predominate over residues 39–49; it reads KTGGRNNNGRI.

Belongs to the universal ribosomal protein uL2 family. As to quaternary structure, part of the 50S ribosomal subunit. Forms a bridge to the 30S subunit in the 70S ribosome.

One of the primary rRNA binding proteins. Required for association of the 30S and 50S subunits to form the 70S ribosome, for tRNA binding and peptide bond formation. It has been suggested to have peptidyltransferase activity; this is somewhat controversial. Makes several contacts with the 16S rRNA in the 70S ribosome. The polypeptide is Large ribosomal subunit protein uL2 (Edwardsiella ictaluri (strain 93-146)).